The following is a 208-amino-acid chain: OVARIAN TUMOR DOMAIN-containing deubiquitinating enzyme 2 (208 aa).

Residues isoleucine 5–serine 127 enclose the OTU domain. Residue aspartate 13 is part of the active site. Cysteine 16 functions as the Nucleophile in the catalytic mechanism. Residues histidine 120 and histidine 201 contribute to the active site.

It belongs to the peptidase C85 family.

It catalyses the reaction Thiol-dependent hydrolysis of ester, thioester, amide, peptide and isopeptide bonds formed by the C-terminal Gly of ubiquitin (a 76-residue protein attached to proteins as an intracellular targeting signal).. Hydrolase that can remove conjugated ubiquitin from proteins in vitro and may therefore play an important regulatory role at the level of protein turnover by preventing degradation. Cysteine protease with a preference for 'Lys-63' and 'Lys-48' -linked ubiquitin (UB) tetramers as substrates. The polypeptide is OVARIAN TUMOR DOMAIN-containing deubiquitinating enzyme 2 (Arabidopsis thaliana (Mouse-ear cress)).